The sequence spans 398 residues: Alpha-2,8-sialyltransferase 8F (398 aa).

Residues 1 to 3 (MRP) lie on the Cytoplasmic side of the membrane. Residues 4–24 (GGALLALLASLLLLLLLRLLW) form a helical; Signal-anchor for type II membrane protein membrane-spanning segment. At 25–398 (CPADAPGRAR…KLQFSKCEVA (374 aa)) the chain is on the lumenal side. N66, N93, N151, and N196 each carry an N-linked (GlcNAc...) asparagine glycan. Intrachain disulfides connect C186-C335 and C200-C395. Residues N214, 236–238 (NPS), and 322–324 (STG) contribute to the substrate site. Residue H370 is the Proton donor/acceptor of the active site.

The protein belongs to the glycosyltransferase 29 family.

It localises to the golgi apparatus membrane. The enzyme catalyses a ganglioside GM3 + CMP-N-acetyl-beta-neuraminate = a ganglioside GD3 + CMP + H(+). The catalysed reaction is a ganglioside GM3 (d18:1(4E)) + CMP-N-acetyl-beta-neuraminate = a ganglioside GD3 (d18:1(4E)) + CMP + H(+). It carries out the reaction a ganglioside GD1a (d18:1(4E)) + CMP-N-acetyl-beta-neuraminate = a ganglioside GT1a (d18:1(4E)) + CMP + H(+). It catalyses the reaction a ganglioside GD1a + CMP-N-acetyl-beta-neuraminate = a ganglioside GT1a + CMP + H(+). The enzyme catalyses a ganglioside GM1b (d18:1(4E)) + CMP-N-acetyl-beta-neuraminate = a ganglioside GD1c (d18:1(4E)) + CMP + H(+). The catalysed reaction is a ganglioside GM1b + CMP-N-acetyl-beta-neuraminate = a ganglioside GD1c + CMP + H(+). It carries out the reaction a ganglioside GM4 (d18:1(4E)) + CMP-N-acetyl-beta-neuraminate = an N-acetyl-alpha-neuraminosyl-(2-&gt;8)-N-acetyl-alpha-neuraminosyl-(2-&gt;3)-beta-D-galactosyl-(1&lt;-&gt;1')-N-acylsphing-4-enine + CMP + H(+). It catalyses the reaction N-acetyl-alpha-neuraminosyl-(2-&gt;3)-beta-D-galactosyl-(1&lt;-&gt;1')-ceramide + CMP-N-acetyl-beta-neuraminate = N-acetyl-alpha-neuraminosyl-(2-&gt;8)-N-acetyl-alpha-neuraminosyl-(2-&gt;3)-beta-D-galactosyl-(1&lt;-&gt;1')-ceramide + CMP + H(+). The enzyme catalyses a ganglioside GT1b (d18:1(4E)) + CMP-N-acetyl-beta-neuraminate = a ganglioside GQ1b (d18:1(4E)) + CMP + H(+). The catalysed reaction is a ganglioside GT1b + CMP-N-acetyl-beta-neuraminate = a ganglioside GQ1b + CMP + H(+). Its pathway is protein modification; protein glycosylation. Alpha-2,8-sialyltransferase that prefers O-glycans to N-glycans or glycolipids as acceptor substrates. The minimal acceptor substrate is the NeuAc-alpha-2,3(6)-Gal sequence at the non-reducing end of their carbohydrate groups. The sequence is that of Alpha-2,8-sialyltransferase 8F (ST8SIA6) from Pan troglodytes (Chimpanzee).